The primary structure comprises 581 residues: Dehydrocurvularin exporter (581 aa).

A compositionally biased stretch (polar residues) spans 1 to 10 (MTDSPSLESN). The interval 1–47 (MTDSPSLESNNKSDMDTPRPPASSHDEHDAAESVSEKQDSATTSPTG) is disordered. N11 is a glycosylation site (N-linked (GlcNAc...) asparagine). Basic and acidic residues predominate over residues 24–39 (SHDEHDAAESVSEKQD). Transmembrane regions (helical) follow at residues 61–81 (LVMF…GIIA), 96–116 (DVGW…PLWG), 126–146 (WVYL…AAAP), 159–179 (GWGA…VAPP), 184–204 (LLIG…PVIG), 215–235 (WCFW…LLFL), 251–271 (IILN…VCLT), 288–308 (VIAT…VEWL), 330–350 (IFCL…PIYF), 363–383 (VNTL…GGAI), 392–412 (YELA…ILDV), 424–444 (VLFG…VQGF), 456–476 (IMVM…QSLF), and 527–547 (VFAF…LIPF). The segment at 552 to 581 (DHEKKPSKDAMASDEVKASEEVQQEKKVTV) is disordered. The segment covering 565–581 (DEVKASEEVQQEKKVTV) has biased composition (basic and acidic residues).

It belongs to the major facilitator superfamily. TCR/Tet family.

Its subcellular location is the cell membrane. Functionally, efflux pump that is probably involved in the export of dehydrocurvularin. This is Dehydrocurvularin exporter from Alternaria cinerariae.